The following is a 401-amino-acid chain: Argininosuccinate synthase (401 aa).

Alanine 8–serine 16 contributes to the ATP binding site. 2 residues coordinate L-citrulline: tyrosine 86 and serine 91. Glycine 116 serves as a coordination point for ATP. 3 residues coordinate L-aspartate: threonine 118, asparagine 122, and aspartate 123. L-citrulline is bound at residue asparagine 122. L-citrulline-binding residues include arginine 126, serine 175, serine 184, glutamate 260, and tyrosine 272.

Belongs to the argininosuccinate synthase family. Type 1 subfamily. Homotetramer.

The protein localises to the cytoplasm. The catalysed reaction is L-citrulline + L-aspartate + ATP = 2-(N(omega)-L-arginino)succinate + AMP + diphosphate + H(+). The protein operates within amino-acid biosynthesis; L-arginine biosynthesis; L-arginine from L-ornithine and carbamoyl phosphate: step 2/3. The chain is Argininosuccinate synthase from Clostridium kluyveri (strain ATCC 8527 / DSM 555 / NBRC 12016 / NCIMB 10680 / K1).